We begin with the raw amino-acid sequence, 118 residues long: Non-specific lipid-transfer protein (118 aa).

An N-terminal signal peptide occupies residues 1-27 (MGVSKVAIAVAVMLMVVVINHPAVVEG). 4 disulfide bridges follow: cysteine 30–cysteine 75, cysteine 40–cysteine 54, cysteine 55–cysteine 100, and cysteine 77–cysteine 114.

The protein belongs to the plant LTP family. In terms of processing, disulfide bonds.

Functionally, plant non-specific lipid-transfer proteins transfer phospholipids as well as galactolipids across membranes. May play a role in wax or cutin deposition in the cell walls of expanding epidermal cells and certain secretory tissues. In Apium graveolens (Celery), this protein is Non-specific lipid-transfer protein.